Reading from the N-terminus, the 153-residue chain is 3-hydroxyacyl-[acyl-carrier-protein] dehydratase FabZ (153 aa).

The active site involves H59.

Belongs to the thioester dehydratase family. FabZ subfamily.

Its subcellular location is the cytoplasm. The catalysed reaction is a (3R)-hydroxyacyl-[ACP] = a (2E)-enoyl-[ACP] + H2O. Functionally, involved in unsaturated fatty acids biosynthesis. Catalyzes the dehydration of short chain beta-hydroxyacyl-ACPs and long chain saturated and unsaturated beta-hydroxyacyl-ACPs. This chain is 3-hydroxyacyl-[acyl-carrier-protein] dehydratase FabZ, found in Thermosynechococcus vestitus (strain NIES-2133 / IAM M-273 / BP-1).